Here is a 297-residue protein sequence, read N- to C-terminus: HTH-type transcriptional regulator ArgP (297 aa).

One can recognise an HTH lysR-type domain in the interval 4 to 60 (PDYRTLQALDAVIRERGFERAAQKLCITQSAVSQRIKQLENMFGQPLLVRTVPPRPT). Residues 21–40 (FERAAQKLCITQSAVSQRIK) constitute a DNA-binding region (H-T-H motif).

This sequence belongs to the LysR transcriptional regulatory family. Homodimer.

Functionally, controls the transcription of genes involved in arginine and lysine metabolism. This is HTH-type transcriptional regulator ArgP from Salmonella choleraesuis (strain SC-B67).